The primary structure comprises 163 residues: Nucleotide-binding protein CYA_0935 (163 aa).

This sequence belongs to the YajQ family.

Functionally, nucleotide-binding protein. In Synechococcus sp. (strain JA-3-3Ab) (Cyanobacteria bacterium Yellowstone A-Prime), this protein is Nucleotide-binding protein CYA_0935.